The chain runs to 331 residues: Ketol-acid reductoisomerase (NADP(+)) (331 aa).

Residues alanine 2–threonine 182 form the KARI N-terminal Rossmann domain. Residues tyrosine 25–glutamine 28, arginine 48, serine 53, and aspartate 83–glutamine 86 contribute to the NADP(+) site. Residue histidine 108 is part of the active site. An NADP(+)-binding site is contributed by glycine 134. Residues threonine 183 to arginine 328 form the KARI C-terminal knotted domain. Residues aspartate 191, glutamate 195, glutamate 227, and glutamate 231 each coordinate Mg(2+). Serine 252 lines the substrate pocket.

This sequence belongs to the ketol-acid reductoisomerase family. It depends on Mg(2+) as a cofactor.

It carries out the reaction (2R)-2,3-dihydroxy-3-methylbutanoate + NADP(+) = (2S)-2-acetolactate + NADPH + H(+). The catalysed reaction is (2R,3R)-2,3-dihydroxy-3-methylpentanoate + NADP(+) = (S)-2-ethyl-2-hydroxy-3-oxobutanoate + NADPH + H(+). Its pathway is amino-acid biosynthesis; L-isoleucine biosynthesis; L-isoleucine from 2-oxobutanoate: step 2/4. It functions in the pathway amino-acid biosynthesis; L-valine biosynthesis; L-valine from pyruvate: step 2/4. Functionally, involved in the biosynthesis of branched-chain amino acids (BCAA). Catalyzes an alkyl-migration followed by a ketol-acid reduction of (S)-2-acetolactate (S2AL) to yield (R)-2,3-dihydroxy-isovalerate. In the isomerase reaction, S2AL is rearranged via a Mg-dependent methyl migration to produce 3-hydroxy-3-methyl-2-ketobutyrate (HMKB). In the reductase reaction, this 2-ketoacid undergoes a metal-dependent reduction by NADPH to yield (R)-2,3-dihydroxy-isovalerate. This is Ketol-acid reductoisomerase (NADP(+)) from Pyrobaculum islandicum (strain DSM 4184 / JCM 9189 / GEO3).